Reading from the N-terminus, the 168-residue chain is HTH-type transcriptional regulator IscR (168 aa).

Residues 2–131 (KLTSKGRYAV…NNITLGELMK (130 aa)) form the HTH rrf2-type domain. The H-T-H motif DNA-binding region spans 28 to 51 (LADISERQGISLSYLEQLFSKLRK). The [2Fe-2S] cluster site is built by Cys-92, Cys-98, and Cys-104.

It depends on [2Fe-2S] cluster as a cofactor.

Regulates the transcription of several operons and genes involved in the biogenesis of Fe-S clusters and Fe-S-containing proteins. This is HTH-type transcriptional regulator IscR from Vibrio campbellii (strain ATCC BAA-1116).